The sequence spans 257 residues: Uracil phosphoribosyltransferase (257 aa).

Residues Arg77, Arg102, and 129 to 137 (DPMLATGGS) contribute to the 5-phospho-alpha-D-ribose 1-diphosphate site. Uracil is bound by residues Ile192 and 197–199 (GDA). Asp198 contributes to the 5-phospho-alpha-D-ribose 1-diphosphate binding site. A disordered region spans residues 203–257 (QFGPNLFTSSAPSRPEAPAGRGRAAAKTPGRRSARSESPSSTSPSARSRKAAPPA). 2 stretches are compositionally biased toward low complexity: residues 211-230 (SSAP…AAKT) and 238-248 (SESPSSTSPSA).

The protein belongs to the UPRTase family. Mg(2+) serves as cofactor.

It catalyses the reaction UMP + diphosphate = 5-phospho-alpha-D-ribose 1-diphosphate + uracil. The protein operates within pyrimidine metabolism; UMP biosynthesis via salvage pathway; UMP from uracil: step 1/1. Its activity is regulated as follows. Allosterically activated by GTP. Catalyzes the conversion of uracil and 5-phospho-alpha-D-ribose 1-diphosphate (PRPP) to UMP and diphosphate. The protein is Uracil phosphoribosyltransferase of Mycolicibacterium paratuberculosis (strain ATCC BAA-968 / K-10) (Mycobacterium paratuberculosis).